Here is an 85-residue protein sequence, read N- to C-terminus: UPF0297 protein lhv_0439 (85 aa).

Belongs to the UPF0297 family.

In Lactobacillus helveticus (strain DPC 4571), this protein is UPF0297 protein lhv_0439.